The sequence spans 142 residues: Fluoride-specific ion channel FluC 1 (142 aa).

The next 4 helical transmembrane spans lie at 17–37 (AWVS…GLAL), 42–62 (GFPF…GFYA), 80–100 (FVMT…LETF), and 109–129 (YIAL…VWLG). 2 residues coordinate Na(+): Gly-87 and Thr-90.

This sequence belongs to the fluoride channel Fluc/FEX (TC 1.A.43) family.

The protein localises to the cell inner membrane. It catalyses the reaction fluoride(in) = fluoride(out). Na(+) is not transported, but it plays an essential structural role and its presence is essential for fluoride channel function. Fluoride-specific ion channel. Important for reducing fluoride concentration in the cell, thus reducing its toxicity. The sequence is that of Fluoride-specific ion channel FluC 1 from Bradyrhizobium diazoefficiens (strain JCM 10833 / BCRC 13528 / IAM 13628 / NBRC 14792 / USDA 110).